Here is a 176-residue protein sequence, read N- to C-terminus: Peroxynitrite isomerase 1 (176 aa).

The tract at residues 1–23 is disordered; that stretch reads MDENSTLSPAHSDAAASSSANTP. Over residues 8 to 20 the composition is skewed to low complexity; that stretch reads SPAHSDAAASSSA. Residues 37-43 carry the GXWXGXG motif; it reads GLWRGEG. Position 168 (H168) interacts with heme b.

The protein belongs to the nitrobindin family. In terms of assembly, homodimer. It depends on heme b as a cofactor.

The enzyme catalyses peroxynitrite = nitrate. It participates in nitrogen metabolism. Its function is as follows. Heme-binding protein able to scavenge peroxynitrite and to protect free L-tyrosine against peroxynitrite-mediated nitration, by acting as a peroxynitrite isomerase that converts peroxynitrite to nitrate. Therefore, this protein likely plays a role in peroxynitrite sensing and in the detoxification of reactive nitrogen and oxygen species (RNS and ROS, respectively). Is able to bind nitric oxide (NO) in vitro, but may act as a sensor of peroxynitrite levels in vivo. The sequence is that of Peroxynitrite isomerase 1 from Rhodococcus jostii (strain RHA1).